The following is a 400-amino-acid chain: tRNA(Met) cytidine acetate ligase (400 aa).

Residues 7–20, Gly-102, Asn-165, and Arg-190 each bind ATP; that span reads ITEY…HIYH.

Belongs to the TmcAL family.

The protein localises to the cytoplasm. The enzyme catalyses cytidine(34) in elongator tRNA(Met) + acetate + ATP = N(4)-acetylcytidine(34) in elongator tRNA(Met) + AMP + diphosphate. Functionally, catalyzes the formation of N(4)-acetylcytidine (ac(4)C) at the wobble position of elongator tRNA(Met), using acetate and ATP as substrates. First activates an acetate ion to form acetyladenylate (Ac-AMP) and then transfers the acetyl group to tRNA to form ac(4)C34. This Clostridium novyi (strain NT) protein is tRNA(Met) cytidine acetate ligase.